The sequence spans 485 residues: Protein nucleotidyltransferase YdiU (485 aa).

Positions 90, 92, 93, 113, 125, 126, 176, and 183 each coordinate ATP. The Proton acceptor role is filled by Asp-252. Mg(2+) contacts are provided by Asn-253 and Asp-262. Asp-262 is a binding site for ATP.

It belongs to the SELO family. It depends on Mg(2+) as a cofactor. Mn(2+) is required as a cofactor.

The catalysed reaction is L-seryl-[protein] + ATP = 3-O-(5'-adenylyl)-L-seryl-[protein] + diphosphate. The enzyme catalyses L-threonyl-[protein] + ATP = 3-O-(5'-adenylyl)-L-threonyl-[protein] + diphosphate. It catalyses the reaction L-tyrosyl-[protein] + ATP = O-(5'-adenylyl)-L-tyrosyl-[protein] + diphosphate. It carries out the reaction L-histidyl-[protein] + UTP = N(tele)-(5'-uridylyl)-L-histidyl-[protein] + diphosphate. The catalysed reaction is L-seryl-[protein] + UTP = O-(5'-uridylyl)-L-seryl-[protein] + diphosphate. The enzyme catalyses L-tyrosyl-[protein] + UTP = O-(5'-uridylyl)-L-tyrosyl-[protein] + diphosphate. Its function is as follows. Nucleotidyltransferase involved in the post-translational modification of proteins. It can catalyze the addition of adenosine monophosphate (AMP) or uridine monophosphate (UMP) to a protein, resulting in modifications known as AMPylation and UMPylation. The protein is Protein nucleotidyltransferase YdiU of Aliivibrio salmonicida (strain LFI1238) (Vibrio salmonicida (strain LFI1238)).